The sequence spans 394 residues: Cell division protein FtsZ (394 aa).

Residues Gly-21–Asn-25, Gly-108–Gly-110, Glu-139, Arg-143, and Asp-187 contribute to the GTP site.

It belongs to the FtsZ family. Homodimer. Polymerizes to form a dynamic ring structure in a strictly GTP-dependent manner. Interacts directly with several other division proteins. Interacts with the SulA inhibitor.

It is found in the cytoplasm. Its function is as follows. Essential cell division protein that forms a contractile ring structure (Z ring) at the future cell division site. The regulation of the ring assembly controls the timing and the location of cell division. One of the functions of the FtsZ ring is to recruit other cell division proteins to the septum to produce a new cell wall between the dividing cells. Binds GTP and shows GTPase activity. In Pseudomonas aeruginosa (strain ATCC 15692 / DSM 22644 / CIP 104116 / JCM 14847 / LMG 12228 / 1C / PRS 101 / PAO1), this protein is Cell division protein FtsZ.